Here is a 438-residue protein sequence, read N- to C-terminus: Na(+)/H(+) antiporter NhaA (438 aa).

A run of 11 helical transmembrane segments spans residues 23-43 (FGGI…NSFL), 62-82 (FFIG…LFFL), 104-124 (SFPV…YFFL), 133-153 (GFGI…MLLG), 162-182 (VFLI…IALF), 185-205 (TNLK…LAVL), 212-232 (SLIP…QSGI), 302-322 (FLAP…NAGV), 337-357 (LGVI…ITFI), 372-392 (WWHI…SMFI), and 410-430 (IAIL…LFVL).

Belongs to the NhaA Na(+)/H(+) (TC 2.A.33) antiporter family.

The protein resides in the cell inner membrane. It carries out the reaction Na(+)(in) + 2 H(+)(out) = Na(+)(out) + 2 H(+)(in). Na(+)/H(+) antiporter that extrudes sodium in exchange for external protons. The polypeptide is Na(+)/H(+) antiporter NhaA (Helicobacter pylori (strain G27)).